The primary structure comprises 156 residues: ATP synthase subunit b (156 aa).

A helical transmembrane segment spans residues 7–27 (LFVQAIVFAILVWFTMKFVWP).

It belongs to the ATPase B chain family. In terms of assembly, F-type ATPases have 2 components, F(1) - the catalytic core - and F(0) - the membrane proton channel. F(1) has five subunits: alpha(3), beta(3), gamma(1), delta(1), epsilon(1). F(0) has three main subunits: a(1), b(2) and c(10-14). The alpha and beta chains form an alternating ring which encloses part of the gamma chain. F(1) is attached to F(0) by a central stalk formed by the gamma and epsilon chains, while a peripheral stalk is formed by the delta and b chains.

The protein resides in the cell inner membrane. In terms of biological role, f(1)F(0) ATP synthase produces ATP from ADP in the presence of a proton or sodium gradient. F-type ATPases consist of two structural domains, F(1) containing the extramembraneous catalytic core and F(0) containing the membrane proton channel, linked together by a central stalk and a peripheral stalk. During catalysis, ATP synthesis in the catalytic domain of F(1) is coupled via a rotary mechanism of the central stalk subunits to proton translocation. Its function is as follows. Component of the F(0) channel, it forms part of the peripheral stalk, linking F(1) to F(0). This is ATP synthase subunit b from Polaromonas sp. (strain JS666 / ATCC BAA-500).